Here is a 345-residue protein sequence, read N- to C-terminus: MSITPQEALTRCIEHREIFHDEMLHLMRLIMRGEMSPVMAAALTMGLRVKKETIGEIAAAATVMREFATKVDVPAEVSDHFVDIVGTGGDGANTFNISTASMFVAAAAGARIAKHGGRGVSSKSGSADVLEALGVNIMLTPEQVAESIETAGIGFMFAPNHHPAMKNVAPIRKELGVRTIFNILGPLTNPAGAPNILMGVFHPDLVGIQVRVMQRLGAKHAVVVYGKDGMDEVSLGAATLVGELKDGVVTEYEIHPEDFGLQMVSNRSLKVADADESKAMLIEALENKPGTPREIVSLNAGAALYAANIAGSIGDGMKLAREAIASGAARAKLDELVRVTNQFKA.

Residues G86, 89–90, T94, 96–99, 114–122, and S126 contribute to the 5-phospho-alpha-D-ribose 1-diphosphate site; these read GD, NIST, and KHGGRGVSS. G86 provides a ligand contact to anthranilate. S98 lines the Mg(2+) pocket. Residue R172 coordinates anthranilate. D231 and E232 together coordinate Mg(2+).

Belongs to the anthranilate phosphoribosyltransferase family. As to quaternary structure, homodimer. Mg(2+) serves as cofactor.

The enzyme catalyses N-(5-phospho-beta-D-ribosyl)anthranilate + diphosphate = 5-phospho-alpha-D-ribose 1-diphosphate + anthranilate. The protein operates within amino-acid biosynthesis; L-tryptophan biosynthesis; L-tryptophan from chorismate: step 2/5. In terms of biological role, catalyzes the transfer of the phosphoribosyl group of 5-phosphorylribose-1-pyrophosphate (PRPP) to anthranilate to yield N-(5'-phosphoribosyl)-anthranilate (PRA). This is Anthranilate phosphoribosyltransferase from Ralstonia pickettii (strain 12J).